Reading from the N-terminus, the 1017-residue chain is NLR family CARD domain-containing protein 4 (1017 aa).

The 88-residue stretch at 1 to 88 folds into the CARD domain; that stretch reads MNFIKENSQV…PLFQELHGLS (88 aa). Residues 95–298 form a nucleotide-binding domain (NBD) region; that stretch reads EEDLDDLAQE…QFGALIAEVG (204 aa). Residues 163–476 enclose the NACHT domain; the sequence is SPCIIEGESG…VTKGNGHLQK (314 aa). 169 to 176 contacts ATP; it reads GESGKGKS. The tract at residues 356 to 463 is winged-helix domain (WHD); it reads SHTQTTLFCT…RLSSLLTSGE (108 aa). Ser533 bears the Phosphoserine mark. LRR repeat units lie at residues 578–598, 649–672, 728–751, 755–778, 780–805, 817–840, 841–863, 871–895, 904–926, 929–956, 958–978, and 992–1014; these read FFRG…LFDF, KQEF…DIKY, VTNL…LTDN, LKNL…KLAE, LTNL…DYIV, EIQL…LHNL, ARLS…ALQQ, LEQL…LLEQ, KLGL…FFEK, LENF…GFEN, KELV…SLVR, and EVQL…AFKL.

Homooligomer; homooligomerizes following activation of Naip proteins by pathogenic proteins such as S.typhimurium (Salmonella) flagellin or PrgJ. Component of the NLRC4 inflammasome, at least composed of NLRC4, caspase-1 (CASP1) and some NAIP family member. Interacts with EIF2AK2/PKR. Post-translationally, phosphorylated at Ser-533 following infection of macrophages with S.typhimurium (Salmonella). Phosphorylation is essential for NLRC4 inflammasome function to promote caspase-1 activation and pyroptosis. PRKCD phosphorylates Ser-533 in vitro.

Its subcellular location is the cytoplasm. The protein resides in the cytosol. Key component of inflammasomes that indirectly senses specific proteins from pathogenic bacteria and fungi and responds by assembling an inflammasome complex that promotes caspase-1 activation, cytokine production and macrophage pyroptosis. The NLRC4 inflammasome is activated as part of the innate immune response to a range of intracellular bacteria. This is NLR family CARD domain-containing protein 4 (NLRC4) from Bos taurus (Bovine).